Consider the following 115-residue polypeptide: Small ribosomal subunit protein uS17 (115 aa).

The protein belongs to the universal ribosomal protein uS17 family. Part of the 30S ribosomal subunit.

One of the primary rRNA binding proteins, it binds specifically to the 5'-end of 16S ribosomal RNA. The polypeptide is Small ribosomal subunit protein uS17 (Granulibacter bethesdensis (strain ATCC BAA-1260 / CGDNIH1)).